The following is a 970-amino-acid chain: Toxin subunit YenC2 (970 aa).

9 RHS repeats span residues 168–182, 297–311, 329–343, 361–375, 408–422, 500–514, 580–594, 606–620, and 640–654; these read AGQC…GLIQ, GVVT…TQRL, LQDL…GNVL, VPEN…YQLV, NYTR…GNLM, DDSE…SQRI, NDQI…TCSS, SMEE…AVWA, and DATG…YYQP. The RHS-repeat associated core domain stretch occupies residues 610 to 690; the sequence is YYPYGGTAVW…PLRLTDPDGM (81 aa). The deaminase domain stretch occupies residues 849-950; it reads TEAFITGIRS…YNCSGIISGL (102 aa).

It belongs to the RHS family. Semipurified toxin complex consists of at least YenA1-YenA2-YenB-YenC1-YenC2-Chi1-Chi2. YenB and the N-terminus of YenC2 form a large hollow shell of beta-strands. The shell is closed at both ends, within which the C-terminus of YenC2 is probably found. The C-terminal region dissociates from the YenB-YenC2 complex at pH 4.5 but not 7.5. The Yen-TC:K9 subcomplex is about 26 nm tall and 22 nm in diameter with 5-fold symmetry and 5 copies of YenA1, YenA2, Chi1 and Chi2; the chitinase subunits may be solvent accessible on the exterior the complex. The Yen-TC:K9 subcomplex has no insecticidal activity. The native complex with additional YenB, YenC1 and YenC2 subunits is 16 nm taller and is insecticidal; the toxicity-conferring subunits are present at about 1 copy each.

Its subcellular location is the secreted. Toxin complex is secreted when grown at 25 degrees Celsius or less; at higher temperatures the proteins are present intracellularly but not secreted. Its function is as follows. Part of an orally active toxin complex (TC) with strong insecticidal effects on larvae of the Coleoptera Costelytra zealandica, Acrossidius tasmania and Adoryphorus couloni and some Lepidoptera larvae. The TC has an endochitinase activity. The sequence is that of Toxin subunit YenC2 from Yersinia entomophaga.